A 444-amino-acid chain; its full sequence is N-succinylarginine dihydrolase (444 aa).

Residues 19–28 (AGLSFGNVAS), N110, and 137–138 (HR) each bind substrate. Residue E174 is part of the active site. R214 provides a ligand contact to substrate. Residue H250 is part of the active site. Residues D252 and N362 each coordinate substrate. Residue C368 is the Nucleophile of the active site.

This sequence belongs to the succinylarginine dihydrolase family. In terms of assembly, homodimer.

The catalysed reaction is N(2)-succinyl-L-arginine + 2 H2O + 2 H(+) = N(2)-succinyl-L-ornithine + 2 NH4(+) + CO2. The protein operates within amino-acid degradation; L-arginine degradation via AST pathway; L-glutamate and succinate from L-arginine: step 2/5. Catalyzes the hydrolysis of N(2)-succinylarginine into N(2)-succinylornithine, ammonia and CO(2). This Shewanella baltica (strain OS223) protein is N-succinylarginine dihydrolase.